We begin with the raw amino-acid sequence, 136 residues long: MKEIATEYSFIKYTELELDDNGSIKQLSIPNKYNVIYAIAINDELVYIGKTKNLRKRINYYRTAINRKDKTSDSTKSALIHSALKEGSKVEFYARQCFNLSMTNELGTMTIATIDLEEPLFIKLFNPPWNIQHKKK.

The GIY-YIG domain occupies 32 to 131 (KYNVIYAIAI…IKLFNPPWNI (100 aa)).

In terms of assembly, homotetramer. It depends on Mg(2+) as a cofactor.

The enzyme catalyses Endonucleolytic nicking and cleavage of cytosine-containing double-stranded DNA.. Its function is as follows. Contributes to the degradation of host DNA, permitting the scavenging of host-derived nucleotides for phage DNA synthesis. Sequence-specific endonuclease. Catalyzes nicking of the bottom strand of double-stranded DNA between the first and second base pair to the right of a top-strand CCGC motif. Does not cleave native phage DNA, which contains 5-hydroxymethylcytosine instead of cytosine. This chain is Endonuclease II (denA), found in Escherichia coli (Bacteriophage T4).